A 372-amino-acid chain; its full sequence is NADH-quinone oxidoreductase subunit H (372 aa).

The next 8 membrane-spanning stretches (helical) occupy residues 34–54 (LPLG…LYAL), 106–126 (FLFV…FAVL), 139–159 (VGLF…LAAG), 178–198 (IVSY…MAGT), 217–237 (FFLF…IASL), 269–289 (VIFL…AIVF), 313–333 (VWGA…QMWL), and 352–372 (VLTP…IYVP).

It belongs to the complex I subunit 1 family. NDH-1 is composed of 14 different subunits. Subunits NuoA, H, J, K, L, M, N constitute the membrane sector of the complex.

The protein resides in the cell inner membrane. It carries out the reaction a quinone + NADH + 5 H(+)(in) = a quinol + NAD(+) + 4 H(+)(out). NDH-1 shuttles electrons from NADH, via FMN and iron-sulfur (Fe-S) centers, to quinones in the respiratory chain. The immediate electron acceptor for the enzyme in this species is believed to be ubiquinone. Couples the redox reaction to proton translocation (for every two electrons transferred, four hydrogen ions are translocated across the cytoplasmic membrane), and thus conserves the redox energy in a proton gradient. This subunit may bind ubiquinone. In Chlorobium luteolum (strain DSM 273 / BCRC 81028 / 2530) (Pelodictyon luteolum), this protein is NADH-quinone oxidoreductase subunit H.